The chain runs to 112 residues: UPF0102 protein TTHA0372 (112 aa).

It belongs to the UPF0102 family.

This Thermus thermophilus (strain ATCC 27634 / DSM 579 / HB8) protein is UPF0102 protein TTHA0372.